Reading from the N-terminus, the 744-residue chain is 6-phosphofructo-2-kinase/fructose-2,6-bisphosphatase (744 aa).

Disordered regions lie at residues 1–23 (MGSG…GGQL) and 213–245 (RSLS…DGSP). Gly-2 is lipidated: N-myristoyl glycine. The CBM20 domain maps to 17 to 122 (NGGGGQLYVS…GDARLALFRL (106 aa)). A compositionally biased stretch (polar residues) spans 213-232 (RSLSASGSFRNDSTPKAAQR). Ser-220 carries the phosphoserine; by CPK3 modification. 2 positions are modified to phosphoserine: Ser-276 and Ser-295. The 6-phosphofructo-2-kinase stretch occupies residues 301 to 549 (SLSASSFLID…VFFLVNTHLT (249 aa)). Ser-303 bears the Phosphoserine; by CPK3 mark. Residue 349-357 (GLPARGKTF) participates in ATP binding. Residues Arg-382 and Arg-406 each contribute to the beta-D-fructose 6-phosphate site. Asp-431 is an active-site residue. Positions 433 and 439 each coordinate beta-D-fructose 6-phosphate. The active site involves Cys-460. Residue 469–474 (NIRLKI) coordinates ATP. Residues Arg-496 and Tyr-500 each contribute to the beta-D-fructose 6-phosphate site. Residues 550–744 (PRPILLTRHG…VQEKRYKLMD (195 aa)) are fructose-2,6-bisphosphatase. Arg-557 lines the beta-D-fructose 2,6-bisphosphate pocket. The active-site Tele-phosphohistidine intermediate is the His-558. The beta-D-fructose 2,6-bisphosphate site is built by Asn-564 and Gly-570. Residue Glu-630 is the Proton donor/acceptor of the active site. Residues Tyr-641, Arg-655, Lys-659, Tyr-670, Gln-697, and Arg-701 each contribute to the beta-D-fructose 2,6-bisphosphate site. 652-655 (YESR) contacts ATP. ATP is bound at residue 697–701 (QAVLR).

It in the C-terminal section; belongs to the phosphoglycerate mutase family. Interacts with 14-3-3 proteins; these interactions may regulate both nitrate assimilation and sucrose/starch partitioning in leaves during the diurnal cycle. In terms of processing, phosphorylation at Ser-220 and Ser-303 by CPK3 promotes 14-3-3 proteins binding.

It is found in the membrane. It localises to the cytoplasm. It catalyses the reaction beta-D-fructose 2,6-bisphosphate + H2O = beta-D-fructose 6-phosphate + phosphate. The enzyme catalyses beta-D-fructose 6-phosphate + ATP = beta-D-fructose 2,6-bisphosphate + ADP + H(+). 6-phosphofructo-2-kinase activity is activated by pyruvate. 6-phosphofructo-2-kinase activity is inhibited by PPi, phosphoenolpyruvate and 2-phosphoglycerate. Fructose-2,6-bisphosphatase activity is inhibited by pyruvate, fructose 1,6-bisphosphate and 6-phosphogluconate. Synthesis and degradation of fructose 2,6-bisphosphate. Regulates carbon partitioning between sucrose versus starch during the diurnal cycle. The sequence is that of 6-phosphofructo-2-kinase/fructose-2,6-bisphosphatase (FKFBP) from Arabidopsis thaliana (Mouse-ear cress).